The chain runs to 357 residues: Protein RecA (357 aa).

Position 67 to 74 (67 to 74 (GPESSGKT)) interacts with ATP. The tract at residues 335 to 357 (LSSSASDDENSEGNVDFETGEVF) is disordered.

Belongs to the RecA family.

Its subcellular location is the cytoplasm. In terms of biological role, can catalyze the hydrolysis of ATP in the presence of single-stranded DNA, the ATP-dependent uptake of single-stranded DNA by duplex DNA, and the ATP-dependent hybridization of homologous single-stranded DNAs. It interacts with LexA causing its activation and leading to its autocatalytic cleavage. This is Protein RecA from Shewanella sp. (strain MR-4).